We begin with the raw amino-acid sequence, 354 residues long: Uroporphyrinogen decarboxylase (354 aa).

Residues Arg27–Arg31, Asp77, Tyr154, Thr209, and His327 each bind substrate.

The protein belongs to the uroporphyrinogen decarboxylase family. In terms of assembly, homodimer.

It localises to the cytoplasm. It carries out the reaction uroporphyrinogen III + 4 H(+) = coproporphyrinogen III + 4 CO2. The protein operates within porphyrin-containing compound metabolism; protoporphyrin-IX biosynthesis; coproporphyrinogen-III from 5-aminolevulinate: step 4/4. Functionally, catalyzes the decarboxylation of four acetate groups of uroporphyrinogen-III to yield coproporphyrinogen-III. In Pseudomonas entomophila (strain L48), this protein is Uroporphyrinogen decarboxylase.